Here is a 1621-residue protein sequence, read N- to C-terminus: ALK tyrosine kinase receptor (1621 aa).

Residues 1–18 (MGAAGFLWLLPPLLLAAA) form the signal peptide. Residues 19–1042 (SYSGAATDQR…PHLPLSLILS (1024 aa)) are Extracellular-facing. The segment at 48–70 (RLQRKSLAVDFVVPSLFRVYARD) is heparin-binding region. 11 N-linked (GlcNAc...) asparagine glycosylation sites follow: Asn-174, Asn-248, Asn-289, Asn-328, Asn-415, Asn-428, Asn-449, Asn-567, Asn-575, Asn-631, and Asn-673. Residues 268–431 (LECSFDFPCE…DFFALKNCSE (164 aa)) form the MAM 1 domain. One can recognise an LDL-receptor class A domain in the interval 441–477 (LQSSFTCWNGTVLQLGQACDFHQDCAQGEDEGQLCSK). One can recognise an MAM 2 domain in the interval 482–640 (FYCNFENGFC…NISISLDCYL (159 aa)). Cys-692 and Cys-705 are oxidised to a cystine. An N-linked (GlcNAc...) asparagine glycan is attached at Asn-713. Cysteines 787 and 798 form a disulfide. 3 N-linked (GlcNAc...) asparagine glycosylation sites follow: Asn-812, Asn-868, and Asn-890. A disulfide bridge connects residues Cys-910 and Cys-932. Asn-990 carries N-linked (GlcNAc...) asparagine glycosylation. 3 disulfides stabilise this stretch: Cys-991/Cys-999, Cys-994/Cys-1010, and Cys-1012/Cys-1025. The segment at 991-1029 (CSHCEVDECHMDPESHKVICFCDHGTVLADDGVSCIVSP) is EGF-like. A helical transmembrane segment spans residues 1043–1063 (VVTSALVAALVLAFSGIMIVY). Topologically, residues 1064 to 1621 (RRKHQELQAM…SKNKVTQPGP (558 aa)) are cytoplasmic. 3 positions are modified to phosphotyrosine: Tyr-1082, Tyr-1096, and Tyr-1100. The Protein kinase domain occupies 1120 to 1396 (ITLIRGLGHG…IEYCTQDPDV (277 aa)). ATP is bound by residues 1126 to 1134 (LGHGAFGEV) and His-1128. Tyr-1135 carries the post-translational modification Phosphotyrosine. Residues Lys-1154 and 1201 to 1203 (ELM) each bind ATP. Asp-1253 (proton acceptor) is an active-site residue. Asp-1274 lines the ATP pocket. Phosphotyrosine is present on Tyr-1282. A disordered region spans residues 1412–1556 (EEKVPMRPKD…WTGPGAGPRR (145 aa)). The span at 1414–1423 (KVPMRPKDPE) shows a compositional bias: basic and acidic residues. Over residues 1441–1461 (SAAPQPAALTAPGPSVKKPPG) the composition is skewed to low complexity. Residues 1462 to 1472 (AGAGAGAGAGA) are compositionally biased toward gly residues. Residues 1506–1518 (NKPTSLWNPTYGS) show a composition bias toward polar residues. Tyr-1516 is subject to Phosphotyrosine. The span at 1543–1552 (AEGGWTGPGA) shows a compositional bias: gly residues.

This sequence belongs to the protein kinase superfamily. Tyr protein kinase family. Insulin receptor subfamily. Homodimer; homodimerizes following heparin- and ligand-binding. Interacts with CBL, IRS1, PIK3R1 and PLCG1. Interacts with FRS2 and SHC1. Interacts with PTN and MDK. Post-translationally, phosphorylated at tyrosine residues by autocatalysis, which activates kinase activity. In cells not stimulated by a ligand, receptor protein tyrosine phosphatase beta and zeta complex (PTPRB/PTPRZ1) dephosphorylates ALK at the sites in ALK that are undergoing autophosphorylation through autoactivation. In terms of tissue distribution, mainly expressed in central nervous system (CNS) and other parts of the brain such as the paraventricular nucleus (PVN) of the hypothalamus. Expression is also found in peripheral nervous systems, eye, nasal epithelium, olfactory nerve, tongue, skin, tissue surrounding the esophagus, stomach, midgut, as well as testis and ovary.

It localises to the cell membrane. The catalysed reaction is L-tyrosyl-[protein] + ATP = O-phospho-L-tyrosyl-[protein] + ADP + H(+). Its activity is regulated as follows. Activated upon ALKAL2 ligand-binding. ALKAL2-driven activation is coupled with heparin-binding. Following ligand-binding, homodimerizes and autophosphorylates, activating its kinase activity. Inactivated through dephosphorylation by receptor protein tyrosine phosphatase beta and zeta complex (PTPRB/PTPRZ1) when there is no stimulation by a ligand. Its function is as follows. Neuronal receptor tyrosine kinase that is essentially and transiently expressed in specific regions of the central and peripheral nervous systems and plays an important role in the genesis and differentiation of the nervous system. Also acts as a key thinness protein involved in the resistance to weight gain: in hypothalamic neurons, controls energy expenditure acting as a negative regulator of white adipose tissue lipolysis and sympathetic tone to fine-tune energy homeostasis. Following activation by ALKAL2 ligand at the cell surface, transduces an extracellular signal into an intracellular response. In contrast, ALKAL1 is not a potent physiological ligand for ALK. Ligand-binding to the extracellular domain induces tyrosine kinase activation, leading to activation of the mitogen-activated protein kinase (MAPK) pathway. Phosphorylates almost exclusively at the first tyrosine of the Y-x-x-x-Y-Y motif. Induces tyrosine phosphorylation of CBL, FRS2, IRS1 and SHC1, as well as of the MAP kinases MAPK1/ERK2 and MAPK3/ERK1. ALK activation may also be regulated by pleiotrophin (PTN) and midkine (MDK). PTN-binding induces MAPK pathway activation, which is important for the anti-apoptotic signaling of PTN and regulation of cell proliferation. MDK-binding induces phosphorylation of the ALK target insulin receptor substrate (IRS1), activates mitogen-activated protein kinases (MAPKs) and PI3-kinase, resulting also in cell proliferation induction. Drives NF-kappa-B activation, probably through IRS1 and the activation of the AKT serine/threonine kinase. Recruitment of IRS1 to activated ALK and the activation of NF-kappa-B are essential for the autocrine growth and survival signaling of MDK. The polypeptide is ALK tyrosine kinase receptor (Mus musculus (Mouse)).